We begin with the raw amino-acid sequence, 332 residues long: Beta-ketoacyl-[acyl-carrier-protein] synthase III (332 aa).

Residues Cys-112 and His-252 contribute to the active site. The ACP-binding stretch occupies residues 253-257; the sequence is QANLR. Asn-282 is an active-site residue.

This sequence belongs to the thiolase-like superfamily. FabH family. Homodimer.

Its subcellular location is the cytoplasm. It catalyses the reaction malonyl-[ACP] + acetyl-CoA + H(+) = 3-oxobutanoyl-[ACP] + CO2 + CoA. It participates in lipid metabolism; fatty acid biosynthesis. Catalyzes the condensation reaction of fatty acid synthesis by the addition to an acyl acceptor of two carbons from malonyl-ACP. Catalyzes the first condensation reaction which initiates fatty acid synthesis and may therefore play a role in governing the total rate of fatty acid production. Possesses both acetoacetyl-ACP synthase and acetyl transacylase activities. Its substrate specificity determines the biosynthesis of branched-chain and/or straight-chain of fatty acids. The chain is Beta-ketoacyl-[acyl-carrier-protein] synthase III from Syntrophomonas wolfei subsp. wolfei (strain DSM 2245B / Goettingen).